A 510-amino-acid polypeptide reads, in one-letter code: NAD(P)H-quinone oxidoreductase subunit 2 B, chloroplastic (510 aa).

13 consecutive transmembrane segments (helical) span residues 24 to 44 (LLLF…GLIL), 57 to 77 (IPWL…ALLF), 99 to 119 (IFQF…VEYI), 124 to 144 (MAIT…MFLC), 150 to 170 (ITIF…SGYT), 183 to 203 (YLLM…WLYG), 227 to 247 (PGIS…LSPA), 295 to 315 (WHLL…LIAI), 323 to 343 (MLAY…IVGD), 347 to 367 (GYAS…GTFA), 395 to 415 (ALSS…AGFF), 418 to 438 (LHLF…IGLL), and 484 to 504 (MIVC…IIAI).

This sequence belongs to the complex I subunit 2 family. As to quaternary structure, NDH is composed of at least 16 different subunits, 5 of which are encoded in the nucleus.

The protein localises to the plastid. The protein resides in the chloroplast thylakoid membrane. The enzyme catalyses a plastoquinone + NADH + (n+1) H(+)(in) = a plastoquinol + NAD(+) + n H(+)(out). It carries out the reaction a plastoquinone + NADPH + (n+1) H(+)(in) = a plastoquinol + NADP(+) + n H(+)(out). Functionally, NDH shuttles electrons from NAD(P)H:plastoquinone, via FMN and iron-sulfur (Fe-S) centers, to quinones in the photosynthetic chain and possibly in a chloroplast respiratory chain. The immediate electron acceptor for the enzyme in this species is believed to be plastoquinone. Couples the redox reaction to proton translocation, and thus conserves the redox energy in a proton gradient. This chain is NAD(P)H-quinone oxidoreductase subunit 2 B, chloroplastic, found in Liriodendron tulipifera (Tuliptree).